The sequence spans 263 residues: 5'-nucleotidase SurE (263 aa).

The a divalent metal cation site is built by Asp-15, Asp-16, Ser-46, and Asn-102.

Belongs to the SurE nucleotidase family. A divalent metal cation is required as a cofactor.

Its subcellular location is the cytoplasm. It catalyses the reaction a ribonucleoside 5'-phosphate + H2O = a ribonucleoside + phosphate. Nucleotidase that shows phosphatase activity on nucleoside 5'-monophosphates. The protein is 5'-nucleotidase SurE of Chlorobaculum tepidum (strain ATCC 49652 / DSM 12025 / NBRC 103806 / TLS) (Chlorobium tepidum).